Here is a 512-residue protein sequence, read N- to C-terminus: Annexin A7 (512 aa).

Residues Gly-14–Ala-38 are compositionally biased toward low complexity. 2 disordered regions span residues Gly-14–His-62 and Gly-146–Thr-190. The span at Ala-39 to Asn-52 shows a compositional bias: gly residues. The segment covering Met-164–Ser-182 has biased composition (low complexity). Annexin repeat units follow at residues Phe-209–Met-279, Pro-280–Ala-351, Gln-364–Gln-436, and Asn-440–Gly-511.

Belongs to the annexin family.

Its function is as follows. Calcium/phospholipid-binding protein which promotes membrane fusion and is involved in exocytosis. This Xenopus laevis (African clawed frog) protein is Annexin A7 (anxa7).